The sequence spans 186 residues: Methylamine dehydrogenase light chain (186 aa).

A signal peptide (tat-type signal) is located at residues 1-57; the sequence is MLGKSQFDDLFEKMSRKVAGHTSRRGFIGRVGTAVAGVALVPLLPVDRRGRVSRANA. Intrachain disulfides connect Cys-78–Cys-143, Cys-84–Cys-116, Cys-91–Cys-176, Cys-93–Cys-141, Cys-101–Cys-132, and Cys-133–Cys-164. Trp-112 carries the tryptophylquinone modification. Residues 112-163 constitute a cross-link (tryptophan tryptophylquinone (Trp-Trp)); it reads WVASCYNPTDKQSYLISYRDCCGANVSGRCACLNTEGELPVYRPEFGNDIIW.

It belongs to the aromatic amine dehydrogenase light chain family. In terms of assembly, heterotetramer of two light and two heavy chains. It depends on tryptophan tryptophylquinone residue as a cofactor. In terms of processing, predicted to be exported by the Tat system. The position of the signal peptide cleavage has been experimentally proven. Tryptophan tryptophylquinone (TTQ) is formed by oxidation of the indole ring of a tryptophan to form tryptophylquinone followed by covalent cross-linking with another tryptophan residue.

It is found in the periplasm. The enzyme catalyses 2 oxidized [amicyanin] + methylamine + H2O = 2 reduced [amicyanin] + formaldehyde + NH4(+) + 2 H(+). It participates in one-carbon metabolism; methylamine degradation; formaldehyde from methylamine: step 1/1. Methylamine dehydrogenase carries out the oxidation of methylamine. Electrons are passed from methylamine dehydrogenase to amicyanin. The chain is Methylamine dehydrogenase light chain (mauA) from Methylorubrum extorquens (strain ATCC 14718 / DSM 1338 / JCM 2805 / NCIMB 9133 / AM1) (Methylobacterium extorquens).